A 276-amino-acid polypeptide reads, in one-letter code: MIVIGRSIVHPYITNEYEPFAAEKQQILSIMAGNQEVYSFRTADELSFDLNLRVNIITSALELFQSGFQFRTFQQSFCNPQFWERTSLGGFQLLPNIAPSIAIQDIFKNGKLYGTECATAMIIIFYKALLSLYEEKTFNRLFANLLLYTWDYDRDLKLITKTSGDIVPGDLVYFKNPQVNPATIEWQGENAIYLGNFFFYGHGVGVKTKEEIIYSLNERRIPYAFISAYLTDFITRIDSRMMSQYAPPNTPQTSIGFIPIRDDAIVATVGHTTTIY.

It belongs to the bacillus TGase family.

It carries out the reaction L-glutaminyl-[protein] + L-lysyl-[protein] = [protein]-L-lysyl-N(6)-5-L-glutamyl-[protein] + NH4(+). Its function is as follows. Probably plays a role in the assembly of the spore coat proteins by catalyzing epsilon-(gamma-glutamyl)lysine cross-links. This is Protein-glutamine gamma-glutamyltransferase from Bacillus mycoides (strain KBAB4) (Bacillus weihenstephanensis).